A 164-amino-acid chain; its full sequence is Peptidyl-prolyl cis-trans isomerase A (164 aa).

M1 is modified (N-acetylmethionine). At V2 the chain carries N-acetylvaline; in Peptidyl-prolyl cis-trans isomerase A, N-terminally processed. Positions F7–Q163 constitute a PPIase cyclophilin-type domain. K28 bears the N6-acetyllysine; alternate mark. K28 is covalently cross-linked (Glycyl lysine isopeptide (Lys-Gly) (interchain with G-Cter in SUMO2); alternate). K28 participates in a covalent cross-link: Glycyl lysine isopeptide (Lys-Gly) (interchain with G-Cter in ubiquitin); alternate. N6-acetyllysine occurs at positions 44 and 76. S77 carries the post-translational modification Phosphoserine. K82 carries the N6-acetyllysine; alternate modification. K82 participates in a covalent cross-link: Glycyl lysine isopeptide (Lys-Gly) (interchain with G-Cter in SUMO2); alternate. T93 carries the post-translational modification Phosphothreonine. N108 is a glycosylation site (N-linked (GlcNAc...) asparagine). N6-acetyllysine is present on residues K125, K131, and K133.

This sequence belongs to the cyclophilin-type PPIase family. PPIase A subfamily. In terms of assembly, interacts with protein phosphatase PPP3CA/calcineurin A. Interacts with isoform 2 of BSG/CD147. Interacts with FOXO1; the interaction promotes FOXO1 dephosphorylation, nuclear accumulation and transcriptional activity. Interacts with integrin ITGA2B:ITGB3; the interaction is ROS and peptidyl-prolyl cis-trans isomerase (PPIase) activity-dependent and is increased in the presence of thrombin. Interacts with MAP3K5. Interacts with TARDBP; the interaction is dependent on the RNA-binding activity of TARDBP and the PPIase activity of PPIA/CYPA and the acetylation of PPIA/CYPA at Lys-125 favors the interaction. Interacts with HNRNPA1, HNRNPA2B1, HNRNPC, RBMX, HNRNPK and HNRNPM. Acetylation at Lys-125 markedly inhibits catalysis of cis to trans isomerization. PPIA acetylation also antagonizes the immunosuppressive effects of cyclosporine by inhibiting the sequential steps of cyclosporine binding and calcineurin inhibition. Acetylation at Lys-125 favors the interaction with TARDBP.

It is found in the cytoplasm. It localises to the secreted. The protein resides in the nucleus. The enzyme catalyses [protein]-peptidylproline (omega=180) = [protein]-peptidylproline (omega=0). Its activity is regulated as follows. Binds cyclosporin A (CsA). CsA mediates some of its effects via an inhibitory action on PPIase. In terms of biological role, catalyzes the cis-trans isomerization of proline imidic peptide bonds in oligopeptides. Exerts a strong chemotactic effect on leukocytes partly through activation of one of its membrane receptors BSG/CD147, initiating a signaling cascade that culminates in MAPK/ERK activation. Activates endothelial cells (ECs) in a proinflammatory manner by stimulating activation of NF-kappa-B and ERK, JNK and p38 MAP-kinases and by inducing expression of adhesion molecules including SELE and VCAM1. Induces apoptosis in ECs by promoting the FOXO1-dependent expression of CCL2 and BCL2L11 which are involved in EC chemotaxis and apoptosis. In response to oxidative stress, initiates proapoptotic and antiapoptotic signaling in ECs via activation of NF-kappa-B and AKT1 and up-regulation of antiapoptotic protein BCL2. Negatively regulates MAP3K5/ASK1 kinase activity, autophosphorylation and oxidative stress-induced apoptosis mediated by MAP3K5/ASK1. Necessary for the assembly of TARDBP in heterogeneous nuclear ribonucleoprotein (hnRNP) complexes and regulates TARDBP binding to RNA UG repeats and TARDBP-dependent expression of HDAC6, ATG7 and VCP which are involved in clearance of protein aggregates. Plays an important role in platelet activation and aggregation. Regulates calcium mobilization and integrin ITGA2B:ITGB3 bidirectional signaling via increased ROS production as well as by facilitating the interaction between integrin and the cell cytoskeleton. Binds heparan sulfate glycosaminoglycans. The protein is Peptidyl-prolyl cis-trans isomerase A (Ppia) of Rattus norvegicus (Rat).